The chain runs to 711 residues: Long-chain-fatty-acid--CoA ligase 4 (711 aa).

A helical; Signal-anchor for type III membrane protein membrane pass occupies residues 8–28; the sequence is LTIVLLPVHLLITIYSALIFI. The Cytoplasmic segment spans residues 29–711; the sequence is PWYFLTNAKK…KDIERMYGGK (683 aa). Ser-447 is subject to Phosphoserine.

The protein belongs to the ATP-dependent AMP-binding enzyme family. Mg(2+) is required as a cofactor.

Its subcellular location is the mitochondrion outer membrane. The protein localises to the peroxisome membrane. It localises to the microsome membrane. It is found in the endoplasmic reticulum membrane. The protein resides in the cell membrane. It carries out the reaction a long-chain fatty acid + ATP + CoA = a long-chain fatty acyl-CoA + AMP + diphosphate. The catalysed reaction is (5Z,8Z,11Z,14Z)-eicosatetraenoate + ATP + CoA = (5Z,8Z,11Z,14Z)-eicosatetraenoyl-CoA + AMP + diphosphate. It catalyses the reaction 15-hydroxy-(5Z,8Z,11Z,13E)-eicosatetraenoate + ATP + CoA = 15-hydroxy-(5Z,8Z,11Z,13E)-eicosatetraenoyl-CoA + AMP + diphosphate. The enzyme catalyses 12-hydroxy-(5Z,8Z,10E,14Z)-eicosatetraenoate + ATP + CoA = 12-hydroxy-(5Z,8Z,10E,14Z)-eicosatetraenoyl-CoA + AMP + diphosphate. It carries out the reaction 5-hydroxy-(6E,8Z,11Z,14Z)-eicosatetraenoate + ATP + CoA = 5-hydroxy-(6E,8Z,11Z,14Z)-eicosatetraenoyl-CoA + AMP + diphosphate. The catalysed reaction is 5,6-epoxy-(8Z,11Z,14Z)-eicosatrienoate + ATP + CoA = 5,6-epoxy-(8Z,11Z,14Z)-eicosatrienoyl-CoA + AMP + diphosphate. It catalyses the reaction 14,15-epoxy-(5Z,8Z,11Z)-eicosatrienoate + ATP + CoA = 14,15-epoxy-(5Z,8Z,11Z)-eicosatrienoyl-CoA + AMP + diphosphate. The enzyme catalyses 11,12-epoxy-(5Z,8Z,14Z)-eicosatrienoate + ATP + CoA = 11,12-epoxy-(5Z,8Z,14Z)-eicosatrienoyl-CoA + AMP + diphosphate. It carries out the reaction 8,9-epoxy-(5Z,11Z,14Z)-eicosatrienoate + ATP + CoA = 8,9-epoxy-(5Z,11Z,14Z)-eicosatrienoyl-CoA + AMP + diphosphate. The catalysed reaction is hexadecanoate + ATP + CoA = hexadecanoyl-CoA + AMP + diphosphate. It catalyses the reaction (E)-hexadec-2-enoate + ATP + CoA = (2E)-hexadecenoyl-CoA + AMP + diphosphate. Both triacsin C and rosiglitazone inhibit arachidonoyl-CoA ligase activity. In terms of biological role, catalyzes the conversion of long-chain fatty acids to their active form acyl-CoA for both synthesis of cellular lipids, and degradation via beta-oxidation. Preferentially activates arachidonate and eicosapentaenoate as substrates. Preferentially activates 8,9-EET &gt; 14,15-EET &gt; 5,6-EET &gt; 11,12-EET. Modulates glucose-stimulated insulin secretion by regulating the levels of unesterified EETs. Modulates prostaglandin E2 secretion. The protein is Long-chain-fatty-acid--CoA ligase 4 (Acsl4) of Rattus norvegicus (Rat).